A 226-amino-acid chain; its full sequence is Apoptosis regulator OPG045 (226 aa).

An essential and sufficient to inhibit host NLRP1 region spans residues N32–Y37.

This sequence belongs to the orthopoxvirus OPG045 family. Homodimer. Interacts with host pro-apoptotic protein BCL2L11 (via BH3 domain). Interacts with host NLRP1. Interacts with host BAK.

It is found in the host mitochondrion outer membrane. The protein localises to the host cytoplasm. Functionally, plays a role in evading host innate immune response by inhibiting host inflammasome activation. Interacts with and inhibits NLR-mediated interleukin-1 beta/IL1B production in infected cells. At the host mitochondria outer membrane, interacts with the BH3 domain of host BAK and prevents BAK from binding active BAX. In turn, host apoptosis is inhibited. The chain is Apoptosis regulator OPG045 (OPG045) from Vaccinia virus (strain Western Reserve) (VACV).